The sequence spans 654 residues: Hepatocyte growth factor activator serine proteases (654 aa).

The signal sequence occupies residues 1-33 (MGRWAWGPSLCPLPGMALLLLLLLLLVPHGAQP). The interval 34 to 100 (QAGGNLTEPP…SSSPGDPVLT (67 aa)) is disordered. Positions 34–370 (QAGGNLTEPP…RLAACESLAR (337 aa)) are cleaved as a propeptide — removed in mature form. 2 N-linked (GlcNAc...) asparagine glycosylation sites follow: N38 and N46. The span at 57 to 81 (PVTSVTPVTPATSAPEAQGPRGRGL) shows a compositional bias: low complexity. Residues 101–148 (VDGQPCRFPFRYGGRMLHACTSEGSAHRKWCATTHNYDRDRAWGYCVQ) enclose the Fibronectin type-II domain. 19 cysteine pairs are disulfide-bonded: C106/C131, C120/C146, C162/C173, C167/C184, C186/C195, C200/C228, C226/C235, C243/C254, C248/C265, C267/C276, C284/C365, C305/C347, C336/C360, C393/C520, C431/C447, C439/C509, C534/C603, C566/C582, and C593/C621. Residues 158-196 (ALDSCASSPCLNGGSCSHTQDPGSYHCTCPMAFTGRNCD) enclose the EGF-like 1 domain. The region spanning 198 to 238 (EKCFDETRYEHLEAGDRWARVSQGQVEQCECAGGQIRCEGT) is the Fibronectin type-I domain. One can recognise an EGF-like 2 domain in the interval 239–277 (RHTACLSSPCLNGGTCHLIVATGTTVCSCPPGHAGRLCN). The Kringle domain occupies 283 to 365 (RCFVGNGTEY…SWEYCRLAAC (83 aa)). The N-linked (GlcNAc...) asparagine glycan is linked to N288. The Peptidase S1 domain occupies 407–645 (IIGGSSSLPG…YVDWIKDRIW (239 aa)). H446 acts as the Charge relay system in catalysis. N-linked (GlcNAc...) asparagine glycans are attached at residues N467 and N491. Catalysis depends on D496, which acts as the Charge relay system. An N-linked (GlcNAc...) asparagine glycan is attached at N545. Residue S597 is the Charge relay system of the active site.

The protein belongs to the peptidase S1 family. In terms of assembly, heterodimer of a short chain and a long chain linked by a disulfide bond. In terms of processing, the active form of HGFAC presents in the serum is derived from the COOH-terminal region of the precursor by the cleavage of bonds between Arg-370 and Ile-371 and Arg-406 and Ile-407. As to expression, liver.

Its subcellular location is the secreted. Functionally, serine protease that hydrolyzes the inactive zymogen hepatocyte growth factor (HGFsc) to an activated disulfide-linked heterodimer, then initiating hepatocyte growth factor receptor signaling pathway. This Canis lupus familiaris (Dog) protein is Hepatocyte growth factor activator serine proteases (HGFAC).